The following is a 361-amino-acid chain: Peptide chain release factor 1 (361 aa).

Q236 bears the N5-methylglutamine mark.

Belongs to the prokaryotic/mitochondrial release factor family. Methylated by PrmC. Methylation increases the termination efficiency of RF1.

The protein resides in the cytoplasm. Its function is as follows. Peptide chain release factor 1 directs the termination of translation in response to the peptide chain termination codons UAG and UAA. This Lactobacillus delbrueckii subsp. bulgaricus (strain ATCC 11842 / DSM 20081 / BCRC 10696 / JCM 1002 / NBRC 13953 / NCIMB 11778 / NCTC 12712 / WDCM 00102 / Lb 14) protein is Peptide chain release factor 1.